The sequence spans 212 residues: Actin-depolymerizing factor 1, isoforms a/b (212 aa).

The ADF-H domain maps to 3-159 (SGVMVDPDVQ…SHKELLNNCP (157 aa)).

This sequence belongs to the actin-binding proteins ADF family. As to quaternary structure, interacts with F-actin.

Its function is as follows. Depolymerizes growing actin filaments in muscle cells; required for the assembly of actin filaments into the functional contractile myofilament lattice of muscle. Competes with unc-87 for actin binding and inhibits the actin-bundling activity of unc-87. The polypeptide is Actin-depolymerizing factor 1, isoforms a/b (Caenorhabditis elegans).